The sequence spans 184 residues: GMP synthase [glutamine-hydrolyzing] subunit A (184 aa).

The region spanning 3–184 (PLYVVNNHGQ…FENFDGICSE (182 aa)) is the Glutamine amidotransferase type-1 domain. Cysteine 75 (nucleophile) is an active-site residue. Active-site residues include histidine 162 and glutamate 164.

In terms of assembly, heterodimer composed of a glutamine amidotransferase subunit (A) and a GMP-binding subunit (B).

The catalysed reaction is XMP + L-glutamine + ATP + H2O = GMP + L-glutamate + AMP + diphosphate + 2 H(+). It functions in the pathway purine metabolism; GMP biosynthesis; GMP from XMP (L-Gln route): step 1/1. Catalyzes the synthesis of GMP from XMP. In Methanoculleus marisnigri (strain ATCC 35101 / DSM 1498 / JR1), this protein is GMP synthase [glutamine-hydrolyzing] subunit A.